The primary structure comprises 270 residues: MDMYAVVGNPVSHSKSPKIHGMFAQQTGESLEYTAIQAPLDGFRETVESFFIGGGKGLNVTVPFKEQAWNIVSERSHRAELAGAVNTLLQRDGRLFGDNTDGEGLVRDICVNQGVALSGKKILLVGAGGAVKGVMAPLLDEGPASIVVANRTVSKAEDLARIFGRNGVVCARAFADLEGPFDVIINGTSASLAGDIPPLPDAVIASHTFTYDMMYSLRDTAFVAWAKARGAAHCCDGLGMLVEQAAAAFYLWRGVRPDTAPVLAGLRQGD.

Residues 14 to 16 and threonine 61 each bind shikimate; that span reads SKS. Residue lysine 65 is the Proton acceptor of the active site. Asparagine 86 and aspartate 101 together coordinate shikimate. NADP(+) is bound by residues 126-130, 150-155, and methionine 213; these read GAGGA and NRTVSK. Tyrosine 215 is a shikimate binding site. Glycine 237 contributes to the NADP(+) binding site.

The protein belongs to the shikimate dehydrogenase family. Homodimer.

It catalyses the reaction shikimate + NADP(+) = 3-dehydroshikimate + NADPH + H(+). It participates in metabolic intermediate biosynthesis; chorismate biosynthesis; chorismate from D-erythrose 4-phosphate and phosphoenolpyruvate: step 4/7. In terms of biological role, involved in the biosynthesis of the chorismate, which leads to the biosynthesis of aromatic amino acids. Catalyzes the reversible NADPH linked reduction of 3-dehydroshikimate (DHSA) to yield shikimate (SA). This Hahella chejuensis (strain KCTC 2396) protein is Shikimate dehydrogenase (NADP(+)).